The primary structure comprises 256 residues: Acetyl-coenzyme A carboxylase carboxyl transferase subunit alpha (256 aa).

One can recognise a CoA carboxyltransferase C-terminal domain in the interval 1–236; it reads MTDVARILKE…KEHLKTEINQ (236 aa).

Belongs to the AccA family. Acetyl-CoA carboxylase is a heterohexamer composed of biotin carboxyl carrier protein (AccB), biotin carboxylase (AccC) and two subunits each of ACCase subunit alpha (AccA) and ACCase subunit beta (AccD).

Its subcellular location is the cytoplasm. The enzyme catalyses N(6)-carboxybiotinyl-L-lysyl-[protein] + acetyl-CoA = N(6)-biotinyl-L-lysyl-[protein] + malonyl-CoA. It participates in lipid metabolism; malonyl-CoA biosynthesis; malonyl-CoA from acetyl-CoA: step 1/1. Component of the acetyl coenzyme A carboxylase (ACC) complex. First, biotin carboxylase catalyzes the carboxylation of biotin on its carrier protein (BCCP) and then the CO(2) group is transferred by the carboxyltransferase to acetyl-CoA to form malonyl-CoA. This is Acetyl-coenzyme A carboxylase carboxyl transferase subunit alpha from Streptococcus uberis (strain ATCC BAA-854 / 0140J).